We begin with the raw amino-acid sequence, 398 residues long: Phosphoglycerate kinase (398 aa).

Residues 21 to 23 (DFN), Arg-36, 59 to 62 (HLGR), Arg-119, and Arg-157 each bind substrate. ATP-binding positions include Lys-208, Gly-296, Glu-327, and 354 to 357 (GGDS).

It belongs to the phosphoglycerate kinase family. In terms of assembly, monomer.

Its subcellular location is the cytoplasm. It carries out the reaction (2R)-3-phosphoglycerate + ATP = (2R)-3-phospho-glyceroyl phosphate + ADP. Its pathway is carbohydrate degradation; glycolysis; pyruvate from D-glyceraldehyde 3-phosphate: step 2/5. The chain is Phosphoglycerate kinase from Streptococcus equi subsp. zooepidemicus (strain MGCS10565).